A 496-amino-acid polypeptide reads, in one-letter code: Cytochrome f, chloroplastic (496 aa).

Residues 1–149 (MASLQTPVMV…VGAAAGSANA (149 aa)) constitute a chloroplast transit peptide. 4 residues coordinate heme: Tyr150, Cys170, Cys173, and His174. Residues 462-481 (VQAFLFFSFTVLATQTLLVV) form a helical membrane-spanning segment.

Belongs to the cytochrome f family. In terms of assembly, interacts with plastocyanin and Rieske iron-sulfur protein. Requires heme as cofactor.

The protein resides in the plastid. The protein localises to the chloroplast thylakoid membrane. In terms of biological role, translocates protons across the thylakoid membrane and transfers electrons from photosystem II to photosystem I. It receives electrons from the Rieske iron-sulfur protein and passes them to plastocyanin. In Euglena gracilis, this protein is Cytochrome f, chloroplastic (petA).